The sequence spans 306 residues: RNA pseudouridylate synthase domain-containing protein 1 (306 aa).

The residue at position 1 (Met-1) is an N-acetylmethionine. Residue Asp-67 is part of the active site. The disordered stretch occupies residues 255–290 (RTDPDPDPMSGGPRPCSPSTPQPRPGRPPPETEAQR). Residues 269-285 (PCSPSTPQPRPGRPPPE) show a composition bias toward pro residues.

The protein belongs to the pseudouridine synthase RluA family.

The protein is RNA pseudouridylate synthase domain-containing protein 1 (Rpusd1) of Mus musculus (Mouse).